A 590-amino-acid polypeptide reads, in one-letter code: Probable metalloendopeptidase G1-type (590 aa).

A Zn(2+)-binding site is contributed by H41. E44 is a catalytic residue. Zn(2+) is bound at residue H45.

It belongs to the peptidase M44 family. It depends on Zn(2+) as a cofactor.

Functionally, seems to be involved in viral proteins maturation by cleavage at Ala-Gly-|-Xaa motifs. The polypeptide is Probable metalloendopeptidase G1-type (Oryctolagus cuniculus (Rabbit)).